A 225-amino-acid polypeptide reads, in one-letter code: Uridylate kinase (225 aa).

Asp-6 provides a ligand contact to Mg(2+). 9 to 10 contributes to the ATP binding site; that stretch reads GS. UMP is bound at residue Gly-44. ATP is bound by residues Gly-45 and Arg-49. Residues Asp-66 and 114-120 each bind UMP; that span reads THPGHTT. Mg(2+) is bound by residues Thr-120 and Asp-121. ATP is bound by residues Thr-140, Asn-141, Tyr-146, and Asp-149. Gly-179 is a binding site for UMP. Residue Ser-182 participates in Mg(2+) binding. Residue Ser-182 coordinates ATP.

Belongs to the UMP kinase family. As to quaternary structure, homohexamer; trimer of dimers.

The protein localises to the cytoplasm. The catalysed reaction is UMP + ATP = UDP + ADP. The protein operates within pyrimidine metabolism; CTP biosynthesis via de novo pathway; UDP from UMP (UMPK route): step 1/1. Inhibited by UTP. In terms of biological role, catalyzes the reversible phosphorylation of UMP to UDP, with ATP as the most efficient phosphate donor. The protein is Uridylate kinase (pyrH) of Pyrococcus furiosus (strain ATCC 43587 / DSM 3638 / JCM 8422 / Vc1).